The following is a 516-amino-acid chain: Cysteine--tRNA ligase (516 aa).

Position 34 (Cys-34) interacts with Zn(2+). The short motif at 36 to 46 is the 'HIGH' region element; that stretch reads PTVYNFAHLGN. Cys-225, His-250, and Glu-254 together coordinate Zn(2+). Positions 285-289 match the 'KMSKS' region motif; that stretch reads KMSKS. An ATP-binding site is contributed by Lys-288.

Belongs to the class-I aminoacyl-tRNA synthetase family. As to quaternary structure, monomer. Zn(2+) serves as cofactor.

The protein resides in the cytoplasm. It carries out the reaction tRNA(Cys) + L-cysteine + ATP = L-cysteinyl-tRNA(Cys) + AMP + diphosphate. This is Cysteine--tRNA ligase from Zymomonas mobilis subsp. mobilis (strain ATCC 31821 / ZM4 / CP4).